A 466-amino-acid polypeptide reads, in one-letter code: 3-isopropylmalate dehydratase large subunit (466 aa).

Residues C347, C407, and C410 each contribute to the [4Fe-4S] cluster site.

This sequence belongs to the aconitase/IPM isomerase family. LeuC type 1 subfamily. As to quaternary structure, heterodimer of LeuC and LeuD. [4Fe-4S] cluster serves as cofactor.

It carries out the reaction (2R,3S)-3-isopropylmalate = (2S)-2-isopropylmalate. The protein operates within amino-acid biosynthesis; L-leucine biosynthesis; L-leucine from 3-methyl-2-oxobutanoate: step 2/4. Catalyzes the isomerization between 2-isopropylmalate and 3-isopropylmalate, via the formation of 2-isopropylmaleate. This chain is 3-isopropylmalate dehydratase large subunit, found in Solibacter usitatus (strain Ellin6076).